The sequence spans 514 residues: Major capsid protein L1 (514 aa).

The segment at 495–514 (GTKTTPYRGSIRGTKRKRKN) is disordered.

The protein belongs to the papillomaviridae L1 protein family. In terms of assembly, self-assembles into homopentamers. The capsid has an icosahedral symmetry and consists of 72 capsomers, with each capsomer being a pentamer of L1. Interacts with the minor capsid protein L2; this interaction is necessary for viral genome encapsidation. Interacts with protein E2; this interaction enhances E2-dependent replication and transcription activation.

Its subcellular location is the virion. The protein resides in the host nucleus. Functionally, forms an icosahedral capsid with a T=7 symmetry and a 50 nm diameter. The capsid is composed of 72 pentamers linked to each other by disulfide bonds and associated with L2 proteins. Binds to heparan sulfate proteoglycans on cell surface of basal layer keratinocytes to provide initial virion attachment. This binding mediates a conformational change in the virus capsid that facilitates efficient infection. The virion enters the host cell via endocytosis. During virus trafficking, L1 protein dissociates from the viral DNA and the genomic DNA is released to the host nucleus. The virion assembly takes place within the cell nucleus. Encapsulates the genomic DNA together with protein L2. The chain is Major capsid protein L1 from Human papillomavirus 47.